A 3856-amino-acid polypeptide reads, in one-letter code: Serine/threonine-protein kinase ATM (3856 aa).

A PWWP domain is found at 108–162 (VGNLVWVMTKYKKWWPGEVVDFKADAKESFMVRSIGQSHLVSWFASSKLKPFKES). The segment at 648-681 (GIPDLNGTNTEPTLVLPQVEPTQRRRRRKKEESP) is disordered. In terms of domain architecture, FAT spans 2727–3393 (VVAGSAVVCG…ILQLLALANG (667 aa)). The Bipartite nuclear localization signal signature appears at 3233 to 3249 (RKHKTKELEVFIKRFKS). Residues 3499 to 3811 (LSDSVTVMNG…GNKDATRALM (313 aa)) enclose the PI3K/PI4K catalytic domain. Residues 3505 to 3511 (VMNGINA) form a G-loop region. Positions 3678–3686 (GLGDRHAMN) are catalytic loop. Residues 3698–3722 (HIDLGVAFEQGLMLKTPERVPFRLT) form an activation loop region. The FATC domain maps to 3824 to 3856 (EMRSIHGQAQQLIQDAIDTDRLSHMFPGWGAWM).

It belongs to the PI3/PI4-kinase family. As to quaternary structure, interacts with RUG3. Ubiquitously expressed at low levels with slightly higher levels in flower buds.

The protein localises to the nucleus. The catalysed reaction is L-seryl-[protein] + ATP = O-phospho-L-seryl-[protein] + ADP + H(+). It catalyses the reaction L-threonyl-[protein] + ATP = O-phospho-L-threonyl-[protein] + ADP + H(+). Functionally, serine/threonine protein kinase which activates checkpoint signaling upon genotoxic stresses such as ionizing radiation (IR) or DNA replication stalling. Plays a central role in the perception and response to both stress-induced damage in somatic cells and developmentally programmed DNA damage during meiosis. Recognizes the substrate consensus sequence [ST]-Q. Phosphorylates histone variant H2AX to form H2AXS139ph at double strand breaks (DSBs), thereby regulating DNA damage response mechanism. Involved in transcriptional regulation of RAD51, PARP1, GR1, and LIG4 in response to DNA double strand breaks. Plays a dual role by activating the DNA damage response at dysfunctional telomeres and yet preventing this activation at functional telomeres. Not required for telomere length homeostasis. Regulates DNA damage response (DDR) synergistically with RUG3. Together with RUG3, involved in the splicing of the ND2/NAD2 mRNA. This chain is Serine/threonine-protein kinase ATM, found in Arabidopsis thaliana (Mouse-ear cress).